The primary structure comprises 553 residues: Arginine--tRNA ligase (553 aa).

The short motif at 130–140 is the 'HIGH' region element; it reads ANPTGDLHIGH.

The protein belongs to the class-I aminoacyl-tRNA synthetase family. In terms of assembly, monomer.

The protein resides in the cytoplasm. It carries out the reaction tRNA(Arg) + L-arginine + ATP = L-arginyl-tRNA(Arg) + AMP + diphosphate. The polypeptide is Arginine--tRNA ligase (Staphylococcus epidermidis (strain ATCC 12228 / FDA PCI 1200)).